We begin with the raw amino-acid sequence, 545 residues long: Ribosomal protein uS12 methylthiotransferase RimO (545 aa).

Residues 7-129 (RRVALVTLGC…IGEHLDAVLG (123 aa)) form the MTTase N-terminal domain. [4Fe-4S] cluster-binding residues include cysteine 16, cysteine 52, cysteine 92, cysteine 197, cysteine 201, and cysteine 204. The region spanning 183–414 (LTAGPVAALK…DLVEQLTATR (232 aa)) is the Radical SAM core domain. Residues 416–510 (QERIGSRVQV…GVDLVAEFTA (95 aa)) form the TRAM domain. 2 disordered regions span residues 454–486 (LPGP…QPGV) and 516–545 (RPSA…ADGT). The segment covering 455–464 (PGPAGAAAGP) has biased composition (low complexity).

It belongs to the methylthiotransferase family. RimO subfamily. [4Fe-4S] cluster serves as cofactor.

The protein resides in the cytoplasm. The catalysed reaction is L-aspartate(89)-[ribosomal protein uS12]-hydrogen + (sulfur carrier)-SH + AH2 + 2 S-adenosyl-L-methionine = 3-methylsulfanyl-L-aspartate(89)-[ribosomal protein uS12]-hydrogen + (sulfur carrier)-H + 5'-deoxyadenosine + L-methionine + A + S-adenosyl-L-homocysteine + 2 H(+). In terms of biological role, catalyzes the methylthiolation of an aspartic acid residue of ribosomal protein uS12. This chain is Ribosomal protein uS12 methylthiotransferase RimO, found in Frankia alni (strain DSM 45986 / CECT 9034 / ACN14a).